Consider the following 115-residue polypeptide: NADH-ubiquinone oxidoreductase chain 3 (115 aa).

3 helical membrane passes run Met-1 to Ile-21, Phe-55 to Leu-75, and Ala-87 to Leu-107.

Belongs to the complex I subunit 3 family.

It is found in the mitochondrion membrane. The enzyme catalyses a ubiquinone + NADH + 5 H(+)(in) = a ubiquinol + NAD(+) + 4 H(+)(out). Functionally, core subunit of the mitochondrial membrane respiratory chain NADH dehydrogenase (Complex I) that is believed to belong to the minimal assembly required for catalysis. Complex I functions in the transfer of electrons from NADH to the respiratory chain. The immediate electron acceptor for the enzyme is believed to be ubiquinone. The sequence is that of NADH-ubiquinone oxidoreductase chain 3 (MT-ND3) from Myxine glutinosa (Atlantic hagfish).